Consider the following 514-residue polypeptide: 2,3-bisphosphoglycerate-independent phosphoglycerate mutase (514 aa).

2 residues coordinate Mn(2+): Asp14 and Ser64. Residue Ser64 is the Phosphoserine intermediate of the active site. Residues His125, 155-156 (RD), Arg187, Arg193, 263-266 (RADR), and Lys336 contribute to the substrate site. Mn(2+) is bound by residues Asp403, His407, Asp444, His445, and His463.

It belongs to the BPG-independent phosphoglycerate mutase family. Monomer. The cofactor is Mn(2+).

It carries out the reaction (2R)-2-phosphoglycerate = (2R)-3-phosphoglycerate. Its pathway is carbohydrate degradation; glycolysis; pyruvate from D-glyceraldehyde 3-phosphate: step 3/5. Its function is as follows. Catalyzes the interconversion of 2-phosphoglycerate and 3-phosphoglycerate. The protein is 2,3-bisphosphoglycerate-independent phosphoglycerate mutase of Salmonella paratyphi A (strain ATCC 9150 / SARB42).